The chain runs to 127 residues: Ribonuclease P protein component 1 (127 aa).

This sequence belongs to the eukaryotic/archaeal RNase P protein component 1 family. Consists of a catalytic RNA component and at least 4-5 protein subunits.

The protein resides in the cytoplasm. It catalyses the reaction Endonucleolytic cleavage of RNA, removing 5'-extranucleotides from tRNA precursor.. Functionally, part of ribonuclease P, a protein complex that generates mature tRNA molecules by cleaving their 5'-ends. The sequence is that of Ribonuclease P protein component 1 from Pyrococcus abyssi (strain GE5 / Orsay).